A 177-amino-acid chain; its full sequence is 3-hydroxyanthranilate 3,4-dioxygenase (177 aa).

Arg-47 is a binding site for O2. Residues His-51, Glu-57, and His-95 each contribute to the Fe cation site. A substrate-binding site is contributed by Glu-57. 2 residues coordinate substrate: Arg-99 and Glu-110. Cys-125, Cys-128, Cys-162, and Cys-165 together coordinate Fe cation.

The protein belongs to the 3-HAO family. As to quaternary structure, homodimer. The cofactor is Fe(2+).

It catalyses the reaction 3-hydroxyanthranilate + O2 = (2Z,4Z)-2-amino-3-carboxymuconate 6-semialdehyde. It functions in the pathway cofactor biosynthesis; NAD(+) biosynthesis; quinolinate from L-kynurenine: step 3/3. In terms of biological role, catalyzes the oxidative ring opening of 3-hydroxyanthranilate to 2-amino-3-carboxymuconate semialdehyde, which spontaneously cyclizes to quinolinate. The polypeptide is 3-hydroxyanthranilate 3,4-dioxygenase (Burkholderia cenocepacia (strain ATCC BAA-245 / DSM 16553 / LMG 16656 / NCTC 13227 / J2315 / CF5610) (Burkholderia cepacia (strain J2315))).